Reading from the N-terminus, the 235-residue chain is MICOS complex subunit MIC25 (235 aa).

Gly2 carries the N-myristoyl glycine lipid modification. Residues Ser13 and Ser31 each carry the phosphoserine modification. Disordered stretches follow at residues 31–90 and 106–132; these read SENV…VKRY and KRER…HEEQ. A coiled-coil region spans residues 129 to 176; that stretch reads HEEQKSVRLARELESREAELRRRDTFYKEQLERIERKNAEMYKLSSEQ. A CHCH domain is found at 194–235; the sequence is EPVCSGLQAQILHCYRDRPHEVLLCSDLVKAYQRCVSAAHKG. Short sequence motifs (cx9C motif) lie at residues 197 to 207 and 218 to 228; these read CSGLQAQILHC and CSDLVKAYQRC. Disulfide bonds link Cys197-Cys228 and Cys207-Cys218.

Belongs to the MICOS complex subunit Mic19 family. Metazoan Mic25 subfamily. As to quaternary structure, component of the mitochondrial contact site and cristae organizing system (MICOS) complex, composed of at least MICOS10/MIC10, CHCHD3/MIC19, CHCHD6/MIC25, APOOL/MIC27, IMMT/MIC60, APOO/MIC23/MIC26 and MICOS13/MIC13. This complex was also known under the names MINOS or MitOS complex. The MICOS complex associates with mitochondrial outer membrane proteins SAMM50, MTX1 and MTX2 (together described as components of the mitochondrial outer membrane sorting assembly machinery (SAM) complex) and DNAJC11, mitochondrial inner membrane protein TMEM11 and with HSPA9. The MICOS and SAM complexes together with DNAJC11 are part of a large protein complex spanning both membranes termed the mitochondrial intermembrane space bridging (MIB) complex. Interacts with DISC1. Interacts with DISC1. Interacts with IMMT/MIC60. (Microbial infection) Interacts with human cytomegalovirus protein UL37 isoform vMIA; this interaction rewires mitochondria by engaging the conserved MICOS complex.

It is found in the mitochondrion inner membrane. It localises to the mitochondrion. In terms of biological role, component of the MICOS complex, a large protein complex of the mitochondrial inner membrane that plays crucial roles in the maintenance of crista junctions, inner membrane architecture, and formation of contact sites to the outer membrane. The sequence is that of MICOS complex subunit MIC25 (CHCHD6) from Homo sapiens (Human).